A 247-amino-acid polypeptide reads, in one-letter code: tRNA uridine(34) hydroxylase (247 aa).

Residues 124-218 (TKQNVIVIDT…YLEDTHNKNN (95 aa)) form the Rhodanese domain. Cys178 functions as the Cysteine persulfide intermediate in the catalytic mechanism.

This sequence belongs to the TrhO family.

It catalyses the reaction uridine(34) in tRNA + AH2 + O2 = 5-hydroxyuridine(34) in tRNA + A + H2O. Its function is as follows. Catalyzes oxygen-dependent 5-hydroxyuridine (ho5U) modification at position 34 in tRNAs. In Rickettsia typhi (strain ATCC VR-144 / Wilmington), this protein is tRNA uridine(34) hydroxylase.